The following is a 275-amino-acid chain: 3-methyl-2-oxobutanoate hydroxymethyltransferase (275 aa).

Residues Asp-44 and Asp-83 each coordinate Mg(2+). Residues 44-45 (DS), Asp-83, and Lys-113 each bind 3-methyl-2-oxobutanoate. Glu-115 contacts Mg(2+). The active-site Proton acceptor is the Glu-182.

It belongs to the PanB family. Homodecamer; pentamer of dimers. The cofactor is Mg(2+).

Its subcellular location is the cytoplasm. The catalysed reaction is 3-methyl-2-oxobutanoate + (6R)-5,10-methylene-5,6,7,8-tetrahydrofolate + H2O = 2-dehydropantoate + (6S)-5,6,7,8-tetrahydrofolate. It participates in cofactor biosynthesis; (R)-pantothenate biosynthesis; (R)-pantoate from 3-methyl-2-oxobutanoate: step 1/2. Catalyzes the reversible reaction in which hydroxymethyl group from 5,10-methylenetetrahydrofolate is transferred onto alpha-ketoisovalerate to form ketopantoate. This chain is 3-methyl-2-oxobutanoate hydroxymethyltransferase, found in Clostridium botulinum (strain Alaska E43 / Type E3).